A 224-amino-acid polypeptide reads, in one-letter code: uncharacterized protein (224 aa).

The protein resides in the virion. This is an uncharacterized protein from Acanthamoeba polyphaga mimivirus (APMV).